The following is a 356-amino-acid chain: Phosphoribosyl pyrophosphate synthase-associated protein 1 (356 aa).

An N-acetylmethionine modification is found at methionine 1. 2 positions are modified to phosphoserine: serine 177 and serine 215.

It belongs to the ribose-phosphate pyrophosphokinase family. As to quaternary structure, binds to PRPS1 and PRPS2.

Functionally, seems to play a negative regulatory role in 5-phosphoribose 1-diphosphate synthesis. The protein is Phosphoribosyl pyrophosphate synthase-associated protein 1 (Prpsap1) of Mus musculus (Mouse).